The following is a 376-amino-acid chain: Queuine tRNA-ribosyltransferase (376 aa).

Asp-93 serves as the catalytic Proton acceptor. Residues 93–97 (DSGGF), Asp-147, Gln-190, and Gly-217 contribute to the substrate site. The segment at 248–254 (GVGKPGD) is RNA binding. Residue Asp-267 is the Nucleophile of the active site. Residues Cys-305, Cys-307, Cys-310, and His-336 each coordinate Zn(2+).

It belongs to the queuine tRNA-ribosyltransferase family. Homodimer. Within each dimer, one monomer is responsible for RNA recognition and catalysis, while the other monomer binds to the replacement base PreQ1. It depends on Zn(2+) as a cofactor.

The enzyme catalyses 7-aminomethyl-7-carbaguanine + guanosine(34) in tRNA = 7-aminomethyl-7-carbaguanosine(34) in tRNA + guanine. The protein operates within tRNA modification; tRNA-queuosine biosynthesis. Catalyzes the base-exchange of a guanine (G) residue with the queuine precursor 7-aminomethyl-7-deazaguanine (PreQ1) at position 34 (anticodon wobble position) in tRNAs with GU(N) anticodons (tRNA-Asp, -Asn, -His and -Tyr). Catalysis occurs through a double-displacement mechanism. The nucleophile active site attacks the C1' of nucleotide 34 to detach the guanine base from the RNA, forming a covalent enzyme-RNA intermediate. The proton acceptor active site deprotonates the incoming PreQ1, allowing a nucleophilic attack on the C1' of the ribose to form the product. After dissociation, two additional enzymatic reactions on the tRNA convert PreQ1 to queuine (Q), resulting in the hypermodified nucleoside queuosine (7-(((4,5-cis-dihydroxy-2-cyclopenten-1-yl)amino)methyl)-7-deazaguanosine). This Dinoroseobacter shibae (strain DSM 16493 / NCIMB 14021 / DFL 12) protein is Queuine tRNA-ribosyltransferase.